A 1482-amino-acid chain; its full sequence is Chromosome partition protein MukB (1482 aa).

Residue 34 to 41 (GGNGAGKS) participates in ATP binding. Residues 333–665 (ASDHLNLVQT…LEKQIERLSQ (333 aa)) adopt a coiled-coil conformation. Residues 666-783 (PSGAEDSRMI…ELPLFGRAAR (118 aa)) form a flexible hinge region. 2 coiled-coil regions span residues 784–1116 (ENRL…AKAG) and 1209–1260 (VDAI…MLNQ).

Belongs to the SMC family. MukB subfamily. As to quaternary structure, homodimerization via its hinge domain. Binds to DNA via its C-terminal region. Interacts, and probably forms a ternary complex, with MukE and MukF via its C-terminal region. The complex formation is stimulated by calcium or magnesium. Interacts with tubulin-related protein FtsZ.

It is found in the cytoplasm. The protein resides in the nucleoid. Functionally, plays a central role in chromosome condensation, segregation and cell cycle progression. Functions as a homodimer, which is essential for chromosome partition. Involved in negative DNA supercoiling in vivo, and by this means organize and compact chromosomes. May achieve or facilitate chromosome segregation by condensation DNA from both sides of a centrally located replisome during cell division. The polypeptide is Chromosome partition protein MukB (Photorhabdus laumondii subsp. laumondii (strain DSM 15139 / CIP 105565 / TT01) (Photorhabdus luminescens subsp. laumondii)).